Reading from the N-terminus, the 301-residue chain is N-acetylmuramic acid 6-phosphate etherase (301 aa).

Residues 59–222 (TSEALMHGGR…STSVMVKLGK (164 aa)) form the SIS domain. Glutamate 87 (proton donor) is an active-site residue. The active site involves glutamate 118.

It belongs to the GCKR-like family. MurNAc-6-P etherase subfamily. Homodimer.

The catalysed reaction is N-acetyl-D-muramate 6-phosphate + H2O = N-acetyl-D-glucosamine 6-phosphate + (R)-lactate. Its pathway is amino-sugar metabolism; N-acetylmuramate degradation. Its function is as follows. Specifically catalyzes the cleavage of the D-lactyl ether substituent of MurNAc 6-phosphate, producing GlcNAc 6-phosphate and D-lactate. This Picosynechococcus sp. (strain ATCC 27264 / PCC 7002 / PR-6) (Agmenellum quadruplicatum) protein is N-acetylmuramic acid 6-phosphate etherase.